We begin with the raw amino-acid sequence, 64 residues long: Ferredoxin-like protein in nif region (64 aa).

Residues 2 to 30 (AFKIIASQCTQCGACEFECPSGAISFKTD) enclose the 4Fe-4S ferredoxin-type domain. Residues Cys10, Cys13, Cys16, Cys20, Cys39, Cys42, Cys51, and Cys55 each coordinate [4Fe-4S] cluster.

The cofactor is [4Fe-4S] cluster.

The polypeptide is Ferredoxin-like protein in nif region (fdxN) (Rhizobium leguminosarum bv. trifolii).